Reading from the N-terminus, the 208-residue chain is Protein TIC 20-II, chloroplastic (208 aa).

Residues 1–49 (MASLCLSLHQTLTNPLSAPRCRPLSLSFPGSSTFSIRPSSRRATALTTR) constitute a chloroplast transit peptide. 4 helical membrane passes run 61–83 (VISI…FLFA), 101–121 (LYRS…LGVV), 134–154 (AMQA…TRIL), and 172–192 (TGVF…SLLG).

The protein belongs to the Tic20 family. As to quaternary structure, part of the Tic complex. In terms of tissue distribution, expressed in leaves, siliques and roots.

Its subcellular location is the plastid. The protein localises to the chloroplast inner membrane. May be involved in protein precursor import into chloroplasts. Not redundant with TIC20-I, TIC20-IV or TIC20-V. This is Protein TIC 20-II, chloroplastic (TIC20-II) from Arabidopsis thaliana (Mouse-ear cress).